The chain runs to 653 residues: Fructose-1,6-bisphosphatase class 3 2 (653 aa).

Belongs to the FBPase class 3 family. The cofactor is Mn(2+).

It carries out the reaction beta-D-fructose 1,6-bisphosphate + H2O = beta-D-fructose 6-phosphate + phosphate. Its pathway is carbohydrate biosynthesis; gluconeogenesis. This Clostridium beijerinckii (strain ATCC 51743 / NCIMB 8052) (Clostridium acetobutylicum) protein is Fructose-1,6-bisphosphatase class 3 2.